A 2191-amino-acid polypeptide reads, in one-letter code: Genome polyprotein (2191 aa).

Glycine 2 is lipidated: N-myristoyl glycine; by host. Residues glycine 2–glutamine 1501 are Cytoplasmic-facing. The tract at residues phenylalanine 566 to valine 582 is amphipathic alpha-helix. Active-site for protease 2A activity residues include histidine 878 and aspartate 896. Cysteine 913 and cysteine 915 together coordinate Zn(2+). Cysteine 967 acts as the For protease 2A activity in catalysis. Residues cysteine 973 and histidine 975 each coordinate Zn(2+). The tract at residues asparagine 1107–glutamine 1179 is membrane-binding. Positions asparagine 1107–threonine 1245 are oligomerization. The RNA-binding stretch occupies residues alanine 1128–glutamine 1132. Residues glutamate 1211–asparagine 1367 enclose the SF3 helicase domain. Residues cysteine 1375, cysteine 1387, and cysteine 1392 each contribute to the Zn(2+) site. A C4-type; degenerate zinc finger spans residues cysteine 1375–cysteine 1392. Positions glutamate 1419 to valine 1426 are RNA-binding. The interval leucine 1430–glutamine 1435 is oligomerization. Residues alanine 1502 to tyrosine 1517 lie within the membrane without spanning it. Over lysine 1518–phenylalanine 2191 the chain is Cytoplasmic. Tyrosine 1527 is modified (O-(5'-phospho-RNA)-tyrosine). Positions glycine 1547–phenylalanine 1725 constitute a Peptidase C3 domain. Residues histidine 1586, glutamate 1617, and cysteine 1693 each act as for protease 3C activity in the active site. The 117-residue stretch at glycine 1956–leucine 2072 folds into the RdRp catalytic domain. Positions 1962 and 2058 each coordinate Mg(2+).

It belongs to the picornaviruses polyprotein family. As to quaternary structure, interacts with capsid protein VP1 and capsid protein VP3 to form heterotrimeric protomers. In terms of assembly, interacts with capsid protein VP0, and capsid protein VP3 to form heterotrimeric protomers. Five protomers subsequently associate to form pentamers which serve as building blocks for the capsid. Interacts with capsid protein VP2, capsid protein VP3 and capsid protein VP4 following cleavage of capsid protein VP0. Interacts with host CD55 and FCGRT; these interactions promote virus attachment to the host cell and subsequent internalization. Interacts with capsid protein VP1 and capsid protein VP3 in the mature capsid. Interacts with host CD55 and FCGRT; these interactions promote virus attachment to the host cell and subsequent internalization. As to quaternary structure, interacts with capsid protein VP0 and capsid protein VP1 to form heterotrimeric protomers. Five protomers subsequently associate to form pentamers which serve as building blocks for the capsid. Interacts with capsid protein VP4 in the mature capsid. Interacts with protein 2C; this interaction may be important for virion morphogenesis. Interacts with host FCGRT; this interaction promotes virus attachment to the host cell and subsequent internalization. In terms of assembly, interacts with capsid protein VP1 and capsid protein VP3. Homodimer. As to quaternary structure, homohexamer; forms a hexameric ring structure with 6-fold symmetry characteristic of AAA+ ATPases. Interacts (via N-terminus) with host RTN3 (via reticulon domain); this interaction is important for viral replication. Interacts with capsid protein VP3; this interaction may be important for virion morphogenesis. In terms of assembly, interacts with protein 3CD. Homodimer. Interacts with host GBF1. Interacts (via GOLD domain) with host ACBD3 (via GOLD domain); this interaction allows the formation of a viral protein 3A/ACBD3 heterotetramer with a 2:2 stoichiometry, which will stimulate the recruitment of host PI4KB in order to synthesize PI4P at the viral RNA replication sites. As to quaternary structure, interacts with RNA-directed RNA polymerase. In terms of assembly, interacts with protein 3AB and with RNA-directed RNA polymerase. Interacts with Viral protein genome-linked and with protein 3CD. The cofactor is Mg(2+). Specific enzymatic cleavages in vivo by the viral proteases yield processing intermediates and the mature proteins. In terms of processing, myristoylation is required for the formation of pentamers during virus assembly. Further assembly of 12 pentamers and a molecule of genomic RNA generates the provirion. Post-translationally, during virion maturation, immature virions are rendered infectious following cleavage of VP0 into VP4 and VP2. This maturation seems to be an autocatalytic event triggered by the presence of RNA in the capsid and it is followed by a conformational change infectious virion. Myristoylation is required during RNA encapsidation and formation of the mature virus particle. In terms of processing, VPg is uridylylated by the polymerase into VPg-pUpU. This acts as a nucleotide-peptide primer for the genomic RNA replication.

It is found in the virion. The protein resides in the host cytoplasm. Its subcellular location is the host cytoplasmic vesicle membrane. It localises to the host nucleus. It carries out the reaction a ribonucleoside 5'-triphosphate + H2O = a ribonucleoside 5'-diphosphate + phosphate + H(+). The catalysed reaction is Selective cleavage of Tyr-|-Gly bond in the picornavirus polyprotein.. It catalyses the reaction RNA(n) + a ribonucleoside 5'-triphosphate = RNA(n+1) + diphosphate. The enzyme catalyses Selective cleavage of Gln-|-Gly bond in the poliovirus polyprotein. In other picornavirus reactions Glu may be substituted for Gln, and Ser or Thr for Gly.. Its activity is regulated as follows. Replication or transcription is subject to high level of random mutations by the nucleotide analog ribavirin. Its function is as follows. Forms an icosahedral capsid of pseudo T=3 symmetry with capsid proteins VP2 and VP3. The capsid is 300 Angstroms in diameter, composed of 60 copies of each capsid protein and enclosing the viral positive strand RNA genome. Capsid protein VP1 mainly forms the vertices of the capsid. Capsid protein VP1 interacts with host cell receptor to provide virion attachment to target host cells. This attachment induces virion internalization. Tyrosine kinases are probably involved in the entry process. After binding to its receptor, the capsid undergoes conformational changes. Capsid protein VP1 N-terminus (that contains an amphipathic alpha-helix) and capsid protein VP4 are externalized. Together, they shape a pore in the host membrane through which viral genome is translocated to host cell cytoplasm. Forms an icosahedral capsid of pseudo T=3 symmetry with capsid proteins VP2 and VP3. The capsid is 300 Angstroms in diameter, composed of 60 copies of each capsid protein and enclosing the viral positive strand RNA genome. Functionally, lies on the inner surface of the capsid shell. After binding to the host receptor, the capsid undergoes conformational changes. Capsid protein VP4 is released, Capsid protein VP1 N-terminus is externalized, and together, they shape a pore in the host membrane through which the viral genome is translocated into the host cell cytoplasm. In terms of biological role, component of immature procapsids, which is cleaved into capsid proteins VP4 and VP2 after maturation. Allows the capsid to remain inactive before the maturation step. Its function is as follows. Cysteine protease that cleaves viral polyprotein and specific host proteins. It is responsible for the autocatalytic cleavage between the P1 and P2 regions, which is the first cleavage occurring in the polyprotein. Also cleaves the host translation initiation factor EIF4G1, in order to shut down the capped cellular mRNA translation. Inhibits the host nucleus-cytoplasm protein and RNA trafficking by cleaving host members of the nuclear pores. Counteracts stress granule formation probably by antagonizing its assembly or promoting its dissassembly. Plays an essential role in the virus replication cycle by acting as a viroporin. Creates a pore in the host endoplasmic reticulum and as a consequence releases Ca2+ in the cytoplasm of infected cell. In turn, high levels of cytoplasmic calcium may trigger membrane trafficking and transport of viral ER-associated proteins to viroplasms, sites of viral genome replication. Functionally, induces and associates with structural rearrangements of intracellular membranes. Displays RNA-binding, nucleotide binding and NTPase activities. May play a role in virion morphogenesis and viral RNA encapsidation by interacting with the capsid protein VP3. In terms of biological role, localizes the viral replication complex to the surface of membranous vesicles. Together with protein 3CD binds the Cis-Active RNA Element (CRE) which is involved in RNA synthesis initiation. Acts as a cofactor to stimulate the activity of 3D polymerase, maybe through a nucleid acid chaperone activity. Its function is as follows. Localizes the viral replication complex to the surface of membranous vesicles. It inhibits host cell endoplasmic reticulum-to-Golgi apparatus transport and causes the disassembly of the Golgi complex, possibly through GBF1 interaction. This would result in depletion of MHC, trail receptors and IFN receptors at the host cell surface. Plays an essential role in viral RNA replication by recruiting ACBD3 and PI4KB at the viral replication sites, thereby allowing the formation of the rearranged membranous structures where viral replication takes place. Acts as a primer for viral RNA replication and remains covalently bound to viral genomic RNA. VPg is uridylylated prior to priming replication into VPg-pUpU. The oriI viral genomic sequence may act as a template for this. The VPg-pUpU is then used as primer on the genomic RNA poly(A) by the RNA-dependent RNA polymerase to replicate the viral genome. During genome replication, the VPg-RNA linkage is removed by the host TDP2, thereby accelerating replication. During the late stage of the replication cycle, host TDP2 is excluded from sites of viral RNA synthesis and encapsidation, allowing for the generation of progeny virions. Functionally, involved in the viral replication complex and viral polypeptide maturation. It exhibits protease activity with a specificity and catalytic efficiency that is different from protease 3C. Protein 3CD binds to the 5'UTR of the viral genome. In terms of biological role, replicates the viral genomic RNA on the surface of intracellular membranes. May form linear arrays of subunits that propagate along a strong head-to-tail interaction called interface-I. Covalently attaches UMP to a tyrosine of VPg, which is used to prime RNA synthesis. The positive stranded RNA genome is first replicated at virus induced membranous vesicles, creating a dsRNA genomic replication form. This dsRNA is then used as template to synthesize positive stranded RNA genomes. ss(+)RNA genomes are either translated, replicated or encapsidated. Its function is as follows. Major viral protease that mediates proteolytic processing of the polyprotein. Cleaves host EIF5B, contributing to host translation shutoff. Also cleaves host PABPC1, contributing to host translation shutoff. Cleaves host NLRP1, triggers host N-glycine-mediated degradation of the autoinhibitory NLRP1 N-terminal fragment. The protein is Genome polyprotein of Echovirus 6 (strain Charles).